A 468-amino-acid chain; its full sequence is Putative ankyrin repeat protein R873 (468 aa).

ANK repeat units lie at residues 38 to 68 (IKTDIIEYIVDNNLLDVLKYFVVLKNLKHNL), 78 to 107 (SLNENLVKNCEKGNIEIIKYLLDIGADIEG), 109 to 137 (DNCAVLTASHHGHIEVVKYLVCKGANFRA), 138 to 167 (NNDKAVRWASDKGHLDVVKYLVSQGSDIRS), 169 to 197 (NDCSICWASGNGHLEMVKYLVSQGVNIRT), 198 to 227 (NDDWAIRLASENGHLEVVKYLVSQGADIRS), 229 to 257 (DDHAIKWASGNGHLEMVKYLVSQSSNIIA), 258 to 287 (EDNYAVRWASENGHLEVIKYLVSQGSNITS), 289 to 316 (YYTIIAASKNGHIDIVKYLVSQGVNIRD), 317 to 346 (CDSSAVQIASENGHLEVVKYLVSQGIDFRE), 348 to 376 (DDLTFDMALRKGHVEIVKYLVGQGVDFRV), 378 to 406 (DDYPVRMASHCGRLGVVKYFVSQGADVRA), 407 to 436 (EDDYAVRMSAEKGHIEVVKFLVDNGANIRA), and 438 to 466 (NDYAVRLASENGHIKIVEYLVSMGAVLNK).

This is Putative ankyrin repeat protein R873 from Acanthamoeba polyphaga mimivirus (APMV).